A 188-amino-acid polypeptide reads, in one-letter code: MGEMTSGVDGHGSTKRTTSEAQKMDFNTDRGSAIPTGDDRGYQCGVIGDSVRFSVFTGYDAADVSIPKISSPGSAGFDLSVLEDREFIRGCHYRLPTGLAIAVPRGYVGIITPRSSQAKNFVSTGIIDSDFRGHIHIMVSAIADFSVKKNQRIAQLVVTPCLTQSEVVPYETLERTRRGTGGFGSSGQ.

The segment at 1–34 (MGEMTSGVDGHGSTKRTTSEAQKMDFNTDRGSAI) is disordered.

It belongs to the dUTPase family. It depends on Mg(2+) as a cofactor.

The enzyme catalyses dUTP + H2O = dUMP + diphosphate + H(+). In terms of biological role, this enzyme is involved in nucleotide metabolism: it produces dUMP, the immediate precursor of thymidine nucleotides and it decreases the intracellular concentration of dUTP so that uracil cannot be incorporated into DNA. The protein is Deoxyuridine 5'-triphosphate nucleotidohydrolase (49) of Ictaluridae (bullhead catfishes).